We begin with the raw amino-acid sequence, 447 residues long: UPF0210 protein lp_2507 (447 aa).

It belongs to the UPF0210 family. Homodimer.

The sequence is that of UPF0210 protein lp_2507 from Lactiplantibacillus plantarum (strain ATCC BAA-793 / NCIMB 8826 / WCFS1) (Lactobacillus plantarum).